The sequence spans 633 residues: Probably inactive receptor-like protein kinase At2g46850 (633 aa).

Residues 1–28 (MPPLFLPSSSSALFLLLLLLLTLQTLTS) form the signal peptide. Topologically, residues 29–285 (ISLSQPQALR…IKKHNGKKLT (257 aa)) are extracellular. Asparagine 45, asparagine 69, and asparagine 231 each carry an N-linked (GlcNAc...) asparagine glycan. Residues 286–306 (VLAGVLAPLFILGSLLALFCL) traverse the membrane as a helical segment. Topologically, residues 307-633 (LKRPVTSHKD…SPDSIYLPKT (327 aa)) are cytoplasmic. The 279-residue stretch at 355-633 (FQDSQKLTQG…SPDSIYLPKT (279 aa)) folds into the Protein kinase domain. ATP is bound by residues 361–369 (LTQGKTGTI) and lysine 384.

The protein belongs to the protein kinase superfamily. Ser/Thr protein kinase family.

Its subcellular location is the membrane. The sequence is that of Probably inactive receptor-like protein kinase At2g46850 from Arabidopsis thaliana (Mouse-ear cress).